We begin with the raw amino-acid sequence, 231 residues long: Orotidine 5'-phosphate decarboxylase (231 aa).

Residues D11, K33, 60–69, T120, R181, Q190, G210, and R211 contribute to the substrate site; that span reads DLKFHDIPNT. K62 (proton donor) is an active-site residue.

The protein belongs to the OMP decarboxylase family. Type 1 subfamily. Homodimer.

It carries out the reaction orotidine 5'-phosphate + H(+) = UMP + CO2. It functions in the pathway pyrimidine metabolism; UMP biosynthesis via de novo pathway; UMP from orotate: step 2/2. Functionally, catalyzes the decarboxylation of orotidine 5'-monophosphate (OMP) to uridine 5'-monophosphate (UMP). In Colwellia psychrerythraea (strain 34H / ATCC BAA-681) (Vibrio psychroerythus), this protein is Orotidine 5'-phosphate decarboxylase.